The chain runs to 32 residues: U21-ctenitoxin-Co1a (32 aa).

3 cysteine pairs are disulfide-bonded: Cys3–Cys17, Cys10–Cys21, and Cys16–Cys30.

In terms of tissue distribution, expressed by the venom gland.

Its subcellular location is the secreted. Not toxic to mice by intracerebroventricular injection. This Ctenus ornatus (Brazilian spider) protein is U21-ctenitoxin-Co1a.